A 134-amino-acid polypeptide reads, in one-letter code: Protein Turandot E (134 aa).

Residues 1 to 38 (MSNTRTVHSSTSISKMNSALQISCLLVVLGCLLGSGHC) form the signal peptide.

This sequence belongs to the Turandot family.

It localises to the secreted. In terms of biological role, a humoral factor that may play a role in stress tolerance. The sequence is that of Protein Turandot E from Drosophila melanogaster (Fruit fly).